A 297-amino-acid chain; its full sequence is MNNLQKQFPHISIKLNEPLSKYTYTKTGGNADIFVMPKSIEETQEIVSYCYQNTIPLTVLGNGSNLIIKDGGIRGVIVHLDLLQTIERKNTQIIAMSGAKLIDTAKFALGESLSGLEFACGIPGSIGGALHMNAGAYGGEISDVLEAATVLTPYGELKKLKRSELKAAYRFSTIAEKNYIVLDATFSLELEDKNIIQAKMDELTAARESKQPLEYPSCGSVFKRPPGHFAGKLIQDSGLQGHIIGGAQVSLKHAGFIVNIGNATATDYMNLIAHVQQTVREKFDVELETEVKIIGED.

The region spanning 27–191 is the FAD-binding PCMH-type domain; the sequence is TGGNADIFVM…LDATFSLELE (165 aa). Arg170 is a catalytic residue. Residue Ser220 is the Proton donor of the active site. Glu290 is a catalytic residue.

This sequence belongs to the MurB family. FAD serves as cofactor.

It localises to the cytoplasm. It catalyses the reaction UDP-N-acetyl-alpha-D-muramate + NADP(+) = UDP-N-acetyl-3-O-(1-carboxyvinyl)-alpha-D-glucosamine + NADPH + H(+). It functions in the pathway cell wall biogenesis; peptidoglycan biosynthesis. Its function is as follows. Cell wall formation. The sequence is that of UDP-N-acetylenolpyruvoylglucosamine reductase from Listeria welshimeri serovar 6b (strain ATCC 35897 / DSM 20650 / CCUG 15529 / CIP 8149 / NCTC 11857 / SLCC 5334 / V8).